Reading from the N-terminus, the 1925-residue chain is MAPRAAGGAPLSARAAAASPPPFQTPPRCPVPLLLLLLLGAARAGALEIQRRFPSPTPTNNFALDGAAGTVYLAAVNRLYQLSGANLSLEAEAAVGPVPDSPLCHAPQLPQASCEHPRRLTDNYNKILQLDPGQGLVVVCGSIYQGFCQLRRRGNISAVAVRFPPAAPPAEPVTVFPSMLNVAANHPNASTVGLVLPPAAGAGGSRLLVGATYTGYGSSFFPRNRSLEDHRFENTPEIAIRSLDTRGDLAKLFTFDLNPSDDNILKIKQGAKEQHKLGFVSAFLHPSDPPPGAQSYAYLALNSEARAGDKESQARSLLARICLPHGAGGDAKKLTESYIQLGLQCAGGAGRGDLYSRLVSVFPARERLFAVFERPQGSPAARAAPAALCAFRFADVRAAIRAARTACFVEPAPDVVAVLDSVVQGTGPACERKLNIQLQPEQLDCGAAHLQHPLSILQPLKATPVFRAPGLTSVAVASVNNYTAVFLGTVNGRLLKINLNESMQVVSRRVVTVAYGEPVHHVMQFDPADSGYLYLMTSHQMARVKVAACNVHSTCGDCVGAADAYCGWCALETRCTLQQDCTNSSQQHFWTSASEGPSRCPAMTVLPSEIDVRQEYPGMILQISGSLPSLSGMEMACDYGNNIRTVARVPGPAFGHQIAYCNLLPRDQFPPFPPNQDHVTVEMSVRVNGRNIVKANFTIYDCSRTAQVYPHTACTSCLSAQWPCFWCSQQHSCVSNQSRCEASPNPTSPQDCPRTLLSPLAPVPTGGSQNILVPLANTAFFQGAALECSFGLEEIFEAVWVNESVVRCDQVVLHTTRKSQVFPLSLQLKGRPARFLDSPEPMTVMVYNCAMGSPDCSQCLGREDLGHLCMWSDGCRLRGPLQPMAGTCPAPEIHAIEPLSGPLDGGTLLTIRGRNLGRRLSDVAHGVWIGGVACEPLPDRYTVSEEIVCVTGPAPGPLSGVVTVNASKEGKSRDRFSYVLPLVHSLEPTMGPKAGGTRITIHGNDLHVGSELQVLVNDTDPCTELMRTDTSIACTMPEGALPAPVPVCVRFERRGCVHGNLTFWYMQNPVITAISPRRSPVSGGRTITVAGERFHMVQNVSMAVHHIGREPTLCKVLNSTLITCPSPGALSNASAPVDFFINGRAYADEVAVAEELLDPEEAQRGSRFRLDYLPNPQFSTAKREKWIKHHPGEPLTLVIHKEQDSLGLQSHEYRVKIGQVSCDIQIVSDRIIHCSVNESLGAAVGQLPITIQVGNFNQTIATLQLGGSETAIIVSIVICSVLLLLSVVALFVFCTKSRRAERYWQKTLLQMEEMESQIREEIRKGFAELQTDMTDLTKELNRSQGIPFLEYKHFVTRTFFPKCSSLYEERYVLPSQTLNSQGSSQAQETHPLLGEWKIPESCRPNMEEGISLFSSLLNNKHFLIVFVHALEQQKDFAVRDRCSLASLLTIALHGKLEYYTSIMKELLVDLIDASAAKNPKLMLRRTESVVEKMLTNWMSICMYSCLRETVGEPFFLLLCAIKQQINKGSIDAITGKARYTLSEEWLLRENIEAKPRNLNVSFQGCGMDSLSVRAMDTDTLTQVKEKILEAFCKNVPYSQWPRAEDVDLEWFASSTQSYILRDLDDTSVVEDGRKKLNTLAHYKIPEGASLAMSLIDKKDNTLGRVKDLDTEKYFHLVLPTDELAEPKKSHRQSHRKKVLPEIYLTRLLSTKGTLQKFLDDLFKAILSIREDKPPLAVKYFFDFLEEQAEKRGISDPDTLHIWKTNSLPLRFWVNILKNPQFVFDIDKTDHIDACLSVIAQAFIDACSISDLQLGKDSPTNKLLYAKEIPEYRKIVQRYYKQIQDMTPLSEQEMNAHLAEESRKYQNEFNTNVAMAEIYKYAKRYRPQIMAALEANPTARRTQLQHKFEQVVALMEDNIYECYSEA.

Low complexity predominate over residues 1–18 (MAPRAAGGAPLSARAAAA). Residues 1–23 (MAPRAAGGAPLSARAAAASPPPF) are disordered. Residues 1–46 (MAPRAAGGAPLSARAAAASPPPFQTPPRCPVPLLLLLLLGAARAGA) form the signal peptide. Residues 47–546 (LEIQRRFPSP…TSHQMARVKV (500 aa)) form the Sema domain. Residues 47–1271 (LEIQRRFPSP…TLQLGGSETA (1225 aa)) are Extracellular-facing. Asn86 carries an N-linked (GlcNAc...) asparagine glycan. 2 disulfides stabilise this stretch: Cys104/Cys114 and Cys140/Cys148. Residues Asn155, Asn188, and Asn224 are each glycosylated (N-linked (GlcNAc...) asparagine). 2 cysteine pairs are disulfide-bonded: Cys322/Cys445 and Cys345/Cys389. Asn481 and Asn500 each carry an N-linked (GlcNAc...) asparagine glycan. Intrachain disulfides connect Cys549/Cys566, Cys555/Cys600, Cys558/Cys575, Cys569/Cys581, and Cys637/Cys661. Asn583 carries N-linked (GlcNAc...) asparagine glycosylation. N-linked (GlcNAc...) asparagine glycosylation is found at Asn696, Asn736, Asn802, Asn965, Asn1017, Asn1060, Asn1099, Asn1118, Asn1132, Asn1237, and Asn1257. IPT/TIG domains lie at 891–979 (PEIH…FSYV), 981–1066 (PLVH…FWYM), and 1069–1160 (PVIT…LDPE). The helical transmembrane segment at 1272 to 1292 (IIVSIVICSVLLLLSVVALFV) threads the bilayer. The Cytoplasmic segment spans residues 1293–1925 (FCTKSRRAER…DNIYECYSEA (633 aa)).

This sequence belongs to the plexin family. As to quaternary structure, interacts with NRP1 and SEMA4A. Interacts with SH3BP1; they dissociate upon SEMA3E binding to PLXND1 allowing SH3BP1 to transduce downstream signal through RAC1 inactivation. Detected at low levels in heart, placenta, lung, skeletal muscle, kidney, thymus and liver. Detected at very low levels in brain, colon, spleen, small intestine and peripheral blood leukocytes.

It localises to the cell membrane. It is found in the cell projection. Its subcellular location is the lamellipodium membrane. Cell surface receptor for SEMA4A and for class 3 semaphorins, such as SEMA3A, SEMA3C and SEMA3E. Plays an important role in cell-cell signaling, and in regulating the migration of a wide spectrum of cell types. Regulates the migration of thymocytes in the medulla. Regulates endothelial cell migration. Plays an important role in ensuring the specificity of synapse formation. Required for normal development of the heart and vasculature. Mediates anti-angiogenic signaling in response to SEMA3E. In Homo sapiens (Human), this protein is Plexin-D1 (PLXND1).